The sequence spans 347 residues: Beta carbonic anhydrase 1, chloroplastic (347 aa).

The transit peptide at 1-113 (MSTAPLSGFF…AAAKVEQITA (113 aa)) directs the protein to the chloroplast. At A114 the chain carries N-acetylalanine. Phosphoserine is present on S175. Y203 is subject to Phosphotyrosine. S266 is subject to Phosphoserine. The residue at position 280 (C280) is an S-nitrosocysteine.

Belongs to the beta-class carbonic anhydrase family. In terms of assembly, homohexamer. In terms of processing, S-nitrosylation at Cys-280 is up-regulated during nitrosative burst and suppresses both binding of salicylic acid and carbonic anhydrase activity. S-nitrosylated in response to an avirulent but not to a virulent bacterial strain. In terms of tissue distribution, strongly expressed in aerial tissues including leaves, stems, flowers and siliques. Accumulates in both guard cells and mesophyll cells.

It localises to the plastid. It is found in the chloroplast stroma. Its subcellular location is the cell membrane. The enzyme catalyses hydrogencarbonate + H(+) = CO2 + H2O. Reversible hydration of carbon dioxide. Required for photosynthesis in cotyledons. Binds salicylic acid. Together with BCA4, involved in the CO(2) signaling pathway which controls gas-exchange between plants and the atmosphere by modulating stomatal development and movements. Promotes water use efficiency. This Arabidopsis thaliana (Mouse-ear cress) protein is Beta carbonic anhydrase 1, chloroplastic.